Here is a 652-residue protein sequence, read N- to C-terminus: DNA ligase (652 aa).

NAD(+)-binding positions include 29–33 (DSDYD), 78–79 (SL), and Glu107. Residue Lys109 is the N6-AMP-lysine intermediate of the active site. NAD(+)-binding residues include Arg130, Glu164, Lys278, and Lys302. Zn(2+)-binding residues include Cys395, Cys398, Cys413, and Cys418. The BRCT domain maps to 577–652 (NSDAALFGLT…IEDEDWLRQL (76 aa)).

Belongs to the NAD-dependent DNA ligase family. LigA subfamily. The cofactor is Mg(2+). Mn(2+) serves as cofactor.

It catalyses the reaction NAD(+) + (deoxyribonucleotide)n-3'-hydroxyl + 5'-phospho-(deoxyribonucleotide)m = (deoxyribonucleotide)n+m + AMP + beta-nicotinamide D-nucleotide.. In terms of biological role, DNA ligase that catalyzes the formation of phosphodiester linkages between 5'-phosphoryl and 3'-hydroxyl groups in double-stranded DNA using NAD as a coenzyme and as the energy source for the reaction. It is essential for DNA replication and repair of damaged DNA. This chain is DNA ligase, found in Streptococcus pyogenes serotype M4 (strain MGAS10750).